Here is a 3078-residue protein sequence, read N- to C-terminus: Probable polyketide synthase 44 (3078 aa).

Residues 10-435 (DNDVAIIGIG…GSNACLILTE (426 aa)) enclose the Ketosynthase family 3 (KS3) domain. Residues C175, H320, and H358 each act as for beta-ketoacyl synthase activity in the active site. The acyl/malonyl transferase stretch occupies residues 627-660 (GILASISIGHSLGEVSSAVCSGMIDLETGCFIIY). S637 functions as the For acyl/malonyl transferase activity in the catalytic mechanism. The segment at 952-1072 (TNHLGYRNER…GRLSTTKHND (121 aa)) is N-terminal hotdog fold. The PKS/mFAS DH domain occupies 952–1239 (TNHLGYRNER…YTQLTPYKNQ (288 aa)). H984 functions as the Proton acceptor; for dehydratase activity in the catalytic mechanism. Residues 1088–1239 (NFVTIQKKEL…YTQLTPYKNQ (152 aa)) form a C-terminal hotdog fold region. The active-site Proton donor; for dehydratase activity is D1150. Residues 2080 to 2119 (LENIKTDLSNKNDNNNNNNNNNNDNKESNIKELLDNDDDE) adopt a coiled-coil conformation. Positions 2087–2108 (LSNKNDNNNNNNNNNNDNKESN) are disordered. A compositionally biased stretch (low complexity) spans 2090 to 2102 (KNDNNNNNNNNNN). The 79-residue stretch at 2558-2636 (SDDLSIREQI…QLIQSVTDAM (79 aa)) folds into the Carrier domain. S2596 carries the O-(pantetheine 4'-phosphoryl)serine modification. A helical membrane pass occupies residues 2694–2714 (NTVFLTGSSGFIGIYILFYLI).

Requires pantetheine 4'-phosphate as cofactor.

It localises to the membrane. In terms of biological role, probable polyketide synthase. This Dictyostelium discoideum (Social amoeba) protein is Probable polyketide synthase 44 (pks44).